We begin with the raw amino-acid sequence, 241 residues long: Dihydropteridine reductase (241 aa).

Position 11–35 (11–35 (LVYGGRGALGSRCVQAFRARNWWVA)) interacts with NADP(+). An N6-succinyllysine mark is found at lysine 70, lysine 76, lysine 93, and lysine 99. Tyrosine 147 serves as the catalytic Proton acceptor. A Phosphoserine modification is found at serine 170.

This sequence belongs to the short-chain dehydrogenases/reductases (SDR) family. In terms of assembly, homodimer.

It carries out the reaction 5,6,7,8-tetrahydropteridine + NAD(+) = 6,7-dihydropteridine + NADH + H(+). The catalysed reaction is 5,6,7,8-tetrahydropteridine + NADP(+) = 6,7-dihydropteridine + NADPH + H(+). Its function is as follows. Catalyzes the conversion of quinonoid dihydrobiopterin into tetrahydrobiopterin. This Rattus norvegicus (Rat) protein is Dihydropteridine reductase (Qdpr).